The following is a 305-amino-acid chain: Ribonuclease BN (305 aa).

Residues H64, H66, D68, H69, H141, D212, and H270 each coordinate Zn(2+). The active-site Proton acceptor is the D68.

The protein belongs to the RNase Z family. RNase BN subfamily. In terms of assembly, homodimer. It depends on Zn(2+) as a cofactor.

Functionally, zinc phosphodiesterase, which has both exoribonuclease and endoribonuclease activities. The protein is Ribonuclease BN of Escherichia coli O17:K52:H18 (strain UMN026 / ExPEC).